The sequence spans 285 residues: Nucleotide-binding protein Avin_12760 (285 aa).

8–15 (GRSGSGKS) contacts ATP. 60–63 (DARN) serves as a coordination point for GTP.

The protein belongs to the RapZ-like family.

In terms of biological role, displays ATPase and GTPase activities. The polypeptide is Nucleotide-binding protein Avin_12760 (Azotobacter vinelandii (strain DJ / ATCC BAA-1303)).